Reading from the N-terminus, the 295-residue chain is UDP-N-acetylenolpyruvoylglucosamine reductase (295 aa).

Residues K23–G188 enclose the FAD-binding PCMH-type domain. R167 is a catalytic residue. The active-site Proton donor is the S217. The active site involves E287.

It belongs to the MurB family. FAD serves as cofactor.

The protein localises to the cytoplasm. The enzyme catalyses UDP-N-acetyl-alpha-D-muramate + NADP(+) = UDP-N-acetyl-3-O-(1-carboxyvinyl)-alpha-D-glucosamine + NADPH + H(+). Its pathway is cell wall biogenesis; peptidoglycan biosynthesis. Cell wall formation. The protein is UDP-N-acetylenolpyruvoylglucosamine reductase of Streptococcus pyogenes serotype M1.